Here is a 146-residue protein sequence, read N- to C-terminus: Large-conductance mechanosensitive channel (146 aa).

3 consecutive transmembrane segments (helical) span residues 21-41 (VGII…ADLI), 44-64 (IIGL…LGDG), and 83-103 (GSFI…FLLV).

This sequence belongs to the MscL family. Homopentamer.

It is found in the cell inner membrane. Channel that opens in response to stretch forces in the membrane lipid bilayer. May participate in the regulation of osmotic pressure changes within the cell. This chain is Large-conductance mechanosensitive channel, found in Cereibacter sphaeroides (strain ATCC 17023 / DSM 158 / JCM 6121 / CCUG 31486 / LMG 2827 / NBRC 12203 / NCIMB 8253 / ATH 2.4.1.) (Rhodobacter sphaeroides).